A 1826-amino-acid polypeptide reads, in one-letter code: 1,3-beta-glucan synthase component bgs3 (1826 aa).

Over residues 34-43 (QSNDQYNNIQ) the composition is skewed to polar residues. A disordered region spans residues 34 to 90 (QSNDQYNNIQHPAPSFANPFIHEQDDSYSDILEEEPDEDAYDSPERPSSTEEFISQD). Residues 59–75 (DSYSDILEEEPDEDAYD) are compositionally biased toward acidic residues. 7 consecutive transmembrane segments (helical) span residues 427 to 447 (IWILHISVFWYFTVYNSPTIY), 465 to 485 (WCAPALAGAVASFISFLALIL), 504 to 524 (LIFVSILIALNIVPAAFIFGF), 543 to 563 (FFFSIGCVAYQSFIPLPFLLG), 597 to 617 (AALWITVFIAKFVESYYFLTL), 637 to 657 (FMIGASLCSHQPKFLLSLVYL), and 660 to 680 (LVLFFLDTYLWYMLISTMFSI). Ser-885 carries the post-translational modification Phosphoserine. Transmembrane regions (helical) follow at residues 1272–1292 (VFIMISMQLLMLVFVNLGAMY), 1329–1349 (IISIFIVFFISFLPLVVHDLL), 1375–1397 (VTQNYANSIFTNLTYGGARYIAT), 1417–1437 (GSSIYLGSRLIMMLLFGTMTV), 1438–1458 (WTTHYVYFWVTMFALVICPFI), 1531–1551 (IFTEVFLPACFAFFTICAYTF), 1571–1591 (IWIMAALPIAISTAALLILLM), 1607–1627 (YGAVLAALAHAVSVFGLVFTF), 1642–1662 (VLGCIVIFAIHRLVFKLVVVF), 1701–1721 (CKVVEMNLFAMDFILSHCILF), and 1770–1790 (SLLFFALLCTFVAMIVVPLVL).

This sequence belongs to the glycosyltransferase 48 family. As to quaternary structure, component of the 1,3-beta-glucan synthase (GS) complex, composed of at least the alternate catalytic subunits bgs1, bgs2, bgs3, and bgs4, and a regulatory subunit chr4.

The protein localises to the membrane. The catalysed reaction is [(1-&gt;3)-beta-D-glucosyl](n) + UDP-alpha-D-glucose = [(1-&gt;3)-beta-D-glucosyl](n+1) + UDP + H(+). In terms of biological role, alternate catalytic subunit of the 1,3-beta-glucan synthase (GS) complex. Synthesizes 1,3-beta-glucan, a major structural component of the yeast cell wall. Required for cell wall biosynthesis and cell elongation. In Schizosaccharomyces pombe (strain 972 / ATCC 24843) (Fission yeast), this protein is 1,3-beta-glucan synthase component bgs3.